The primary structure comprises 318 residues: Methionyl-tRNA formyltransferase (318 aa).

A (6S)-5,6,7,8-tetrahydrofolate-binding site is contributed by Ser-112–Pro-115.

It belongs to the Fmt family.

It catalyses the reaction L-methionyl-tRNA(fMet) + (6R)-10-formyltetrahydrofolate = N-formyl-L-methionyl-tRNA(fMet) + (6S)-5,6,7,8-tetrahydrofolate + H(+). Functionally, attaches a formyl group to the free amino group of methionyl-tRNA(fMet). The formyl group appears to play a dual role in the initiator identity of N-formylmethionyl-tRNA by promoting its recognition by IF2 and preventing the misappropriation of this tRNA by the elongation apparatus. The protein is Methionyl-tRNA formyltransferase of Citrifermentans bemidjiense (strain ATCC BAA-1014 / DSM 16622 / JCM 12645 / Bem) (Geobacter bemidjiensis).